A 446-amino-acid polypeptide reads, in one-letter code: tRNA-2-methylthio-N(6)-dimethylallyladenosine synthase (446 aa).

The 121-residue stretch at 2–122 folds into the MTTase N-terminal domain; sequence KKAYVKSYGC…LPDLLRQSRE (121 aa). Positions 11, 47, 85, 157, 161, and 164 each coordinate [4Fe-4S] cluster. One can recognise a Radical SAM core domain in the interval 143–375; the sequence is RNRGVTGFLT…QQLLDQQRHA (233 aa). The TRAM domain occupies 378–440; it reads AAAVGTVAEI…SNSLFGEVLE (63 aa).

Belongs to the methylthiotransferase family. MiaB subfamily. In terms of assembly, monomer. Requires [4Fe-4S] cluster as cofactor.

It localises to the cytoplasm. It catalyses the reaction N(6)-dimethylallyladenosine(37) in tRNA + (sulfur carrier)-SH + AH2 + 2 S-adenosyl-L-methionine = 2-methylsulfanyl-N(6)-dimethylallyladenosine(37) in tRNA + (sulfur carrier)-H + 5'-deoxyadenosine + L-methionine + A + S-adenosyl-L-homocysteine + 2 H(+). Functionally, catalyzes the methylthiolation of N6-(dimethylallyl)adenosine (i(6)A), leading to the formation of 2-methylthio-N6-(dimethylallyl)adenosine (ms(2)i(6)A) at position 37 in tRNAs that read codons beginning with uridine. In Methylorubrum populi (strain ATCC BAA-705 / NCIMB 13946 / BJ001) (Methylobacterium populi), this protein is tRNA-2-methylthio-N(6)-dimethylallyladenosine synthase.